A 430-amino-acid chain; its full sequence is MPSVVVVGTQWGDEGKGKITDFLSSNAEVIARYQGGDNAGHTIVIDGKKFKLHLIPSGIFFPEKISVIGNGVVVNPKSLIEEIAYLAENGVSANSLRISDRAHVILPYHKKLDFLQEEAKGDKKIGTTIKGIGPAYMDKAARVGIRIADLLDKEIFEERLRTNLEVKNREFVKMYDSEPLEFEEIFEEYYEYGQQLKKYVTDTSVILNDALDAGKRVLFEGAQGVMLDIDQGTYPFVTSSNPVAGGVTIGSGVGPSKISKVVGVCKAYTSRVGDGPFPTELFDEVGHQIREVGHEYGTTTGRPRRVGWFDSVVMRHAKRVSGLTNLSLNSIDVLSGLETVKICVAYERSNGEQITHYPASLKELADCKPIYEELPGWSEDITSCRTLEEIPEAARNYVRRVGELVGVRISTFSVGPGREQTNVLESVWGV.

GTP is bound by residues 12–18 (GDEGKGK) and 40–42 (GHT). Catalysis depends on D13, which acts as the Proton acceptor. Residues D13 and G40 each coordinate Mg(2+). IMP-binding positions include 13–16 (DEGK), 38–41 (NAGH), T128, R142, Q223, T238, and R302. The Proton donor role is filled by H41. 298–304 (TTTGRPR) serves as a coordination point for substrate. Residues R304, 330–332 (SID), and 413–415 (SVG) each bind GTP.

It belongs to the adenylosuccinate synthetase family. Homodimer. It depends on Mg(2+) as a cofactor.

It localises to the cytoplasm. The enzyme catalyses IMP + L-aspartate + GTP = N(6)-(1,2-dicarboxyethyl)-AMP + GDP + phosphate + 2 H(+). It functions in the pathway purine metabolism; AMP biosynthesis via de novo pathway; AMP from IMP: step 1/2. Its function is as follows. Plays an important role in the de novo pathway of purine nucleotide biosynthesis. Catalyzes the first committed step in the biosynthesis of AMP from IMP. The chain is Adenylosuccinate synthetase from Lactococcus lactis subsp. cremoris (strain MG1363).